The chain runs to 545 residues: Phenylalanine--tRNA ligase beta subunit (545 aa).

The B5 domain occupies 268-343; that stretch reads FLHKIQNVRE…MSIGYNNLEP (76 aa). 4 residues coordinate Mg(2+): aspartate 321, aspartate 327, glutamate 330, and aspartate 331.

It belongs to the phenylalanyl-tRNA synthetase beta subunit family. Type 2 subfamily. Tetramer of two alpha and two beta subunits. Requires Mg(2+) as cofactor.

It is found in the cytoplasm. It carries out the reaction tRNA(Phe) + L-phenylalanine + ATP = L-phenylalanyl-tRNA(Phe) + AMP + diphosphate + H(+). The protein is Phenylalanine--tRNA ligase beta subunit of Saccharolobus islandicus (strain L.S.2.15 / Lassen #1) (Sulfolobus islandicus).